Here is a 406-residue protein sequence, read N- to C-terminus: Peptidyl-alpha-hydroxyglycine alpha-amidating lyase 2 (406 aa).

The first 19 residues, 1-19, serve as a signal peptide directing secretion; that stretch reads MSRLLFVALLAISLGYVAS. 4 NHL repeats span residues 168 to 209, 218 to 261, 264 to 308, and 358 to 402; these read GAIK…FKPF, GKRF…FNAA, LLRT…PKAG, and DPRS…RVWK. 2 disulfides stabilise this stretch: C231–C251 and C293–C304.

Belongs to the peptidyl-alpha-hydroxyglycine alpha-amidating lyase family. It depends on Zn(2+) as a cofactor. Post-translationally, N-glycosylated. In terms of tissue distribution, only found in a subset of neurons distributed throughout all levels of the central nervous system (CNS). Present in at least some neuroendocrine cells. In adult brains, it is only present in a small handful of cells, the majority of which being distributed in distal parts of the medulla, with a higher expression in the posterior surface of the brain (at protein level).

Its subcellular location is the secreted. The catalysed reaction is a [peptide]-C-terminal (2S)-2-hydroxyglycine = a [peptide]-C-terminal amide + glyoxylate. Functionally, peptidyl-alpha-hydroxylglycine alpha-amidating lyase that catalyzes an essential reaction in C-terminal alpha-amidation of peptides. Mediates the dismutation of the unstable peptidyl(2-hydroxyglycine) intermediate to glyoxylate and the corresponding desglycine peptide amide. C-terminal amidation of peptides such as neuropeptides is essential for full biological activity. This chain is Peptidyl-alpha-hydroxyglycine alpha-amidating lyase 2 (Pal2), found in Drosophila melanogaster (Fruit fly).